The following is a 668-amino-acid chain: Tyrosine-protein phosphatase non-receptor type ptp-2 (668 aa).

SH2 domains follow at residues 10 to 113 (NFYY…KKPV) and 134 to 232 (WWHG…EEPL). The region spanning 264–580 (ISEEFDRLSQ…QFLYKALAFY (317 aa)) is the Tyrosine-protein phosphatase domain. The active-site Phosphocysteine intermediate is Cys518. The interval 603-668 (PRRLRPTPNA…SSTLLKSTKK (66 aa)) is disordered. Composition is skewed to low complexity over residues 616-634 (SSAR…SSRT) and 652-668 (STSS…STKK).

Belongs to the protein-tyrosine phosphatase family. Non-receptor class 2 subfamily. Expressed in embryonic cells, developing vulva, body wall muscles, head neurons and gonadal sheath cells.

Its subcellular location is the cytoplasm. The catalysed reaction is O-phospho-L-tyrosyl-[protein] + H2O = L-tyrosyl-[protein] + phosphate. Functionally, involved in embryonic and larval development. Plays a role in oogenesis by regulating mpk-1 phosphorylation and oocyte maturation in response to major sperm protein (MSP). During the formation of neuromuscular junctions at the larval stage, negatively regulates membrane protrusion from body wall muscles probably downstream of receptor egl-15. Plays a role in fluid homeostasis probably downstream of receptor egl-15 and adapter soc-1. Promotes vulva induction and negatively regulates fertility probably downstream of receptor let-23. Negatively regulates daf-2-mediated repression of dauer formation. The protein is Tyrosine-protein phosphatase non-receptor type ptp-2 of Caenorhabditis elegans.